The chain runs to 187 residues: Large ribosomal subunit protein uL6c (187 aa).

This sequence belongs to the universal ribosomal protein uL6 family. Part of the 50S ribosomal subunit.

Its subcellular location is the plastid. The protein localises to the chloroplast. Its function is as follows. Binds 23S rRNA. The polypeptide is Large ribosomal subunit protein uL6c (rpl6) (Thalassiosira pseudonana (Marine diatom)).